Consider the following 250-residue polypeptide: MNVRRVESISAQLEEASSTGGFLYTQNSTKRSIKERLMKLLPCSAAKTSSPAVQNSVEDELEMATVRHRPEALELLEAQSKFTKKELQILYRGFKNECPSGVVNEDTFKEIYSQFFPQGDSTTYAHFLFNAFDTDHNGAVSFEDFIKGLSILLRGTVQEKLNWAFNLYDINKDGYITKEEMLDIMKAIYDMMGKCTYPVLKEDAPRQHVETFFQKMDKNKDGVVTIDEFIESCQKDENIMRSMQLFENVI.

Residues 2 to 44 (NVRRVESISAQLEEASSTGGFLYTQNSTKRSIKERLMKLLPCS) form a KIS region. Phosphoserine is present on residues S17 and S56. In terms of domain architecture, EF-hand 1; degenerate spans 61–117 (LEMATVRHRPEALELLEAQSKFTKKELQILYRGFKNECPSGVVNEDTFKEIYSQFFP). 3 EF-hand domains span residues 120–155 (DSTT…LLRG), 156–191 (TVQE…IYDM), and 204–239 (APRQ…DENI). D133, D135, N137, D144, D169, N171, D173, Y175, E180, D217, N219, D221, and E228 together coordinate Ca(2+). Residues 237–250 (ENIMRSMQLFENVI) are interaction with KCND2.

This sequence belongs to the recoverin family. Component of heteromultimeric potassium channels. Identified in potassium channel complexes containing KCND1, KCND2, KCND3, KCNIP1, KCNIP2, KCNIP3, KCNIP4, DPP6 and DPP10. Interacts with KCND2. Interacts with KCND3. Interacts with the C-terminus of PSEN2 and probably PSEN1.

Its subcellular location is the cell membrane. It localises to the cytoplasm. The protein resides in the peroxisome. Functionally, regulatory subunit of Kv4/D (Shal)-type voltage-gated rapidly inactivating A-type potassium channels. Modulates KCND2 channel density, inactivation kinetics and rate of recovery from inactivation in a calcium-dependent and isoform-specific manner. Modulates KCND3/Kv4.3 currents. Isoform 4 does not increase KCND2 expression at the cell membrane. Isoform 4 retains KCND3 in the endoplasmic reticulum and negatively regulates its expression at the cell membrane. This Bos taurus (Bovine) protein is Kv channel-interacting protein 4 (KCNIP4).